The sequence spans 1454 residues: Probable cleavage and polyadenylation specificity factor subunit 1 (1454 aa).

A disordered region spans residues 736–765 (KQSNTRKRKRLGHDAIQSSRGGEQSDAIDP).

The protein belongs to the CPSF1 family. As to quaternary structure, CPSF is a heterotetramer composed of four distinct subunits 160 (cpsf-1), 100 (cpsf-2), 70 (cpsf-3), and 30 kDa (cpsf-4).

It is found in the nucleus. CPSF plays a key role in pre-mRNA 3'-end formation, recognizing the AAUAAA signal sequence and interacting with poly(A)polymerase and other factors to bring about cleavage and poly(A) addition. This subunit is involved in the RNA recognition step of the polyadenylation reaction. This Caenorhabditis elegans protein is Probable cleavage and polyadenylation specificity factor subunit 1 (cpsf-1).